The chain runs to 207 residues: Ciliary microtubule-associated protein 3 (207 aa).

Interacts with proteins involved in ciliary transport, including ARL13B, CETN1, KIF3A, RAB6A, RAB8A, TUBB1 and TUBG1. Interacts with AURKA. Expressed in tissues rich in ciliated cells, such as lung, kidney, vas deferens and testis. Both isoforms 1 and 2 are expressed in testis.

It localises to the golgi apparatus. It is found in the golgi stack. The protein localises to the trans-Golgi network. Its subcellular location is the nucleus. The protein resides in the cytoplasm. It localises to the cytoplasmic vesicle. During primary cilia disassembly, involved in cilia disassembly. Required specifically to control cilia retraction as well as the liberation and duplication of the basal body/centrosome. May act by stimulating AURKA activity at the basal body in a cell cycle-dependent manner. This is Ciliary microtubule-associated protein 3 (Cimap3) from Mus musculus (Mouse).